Consider the following 343-residue polypeptide: Mitochondrial import inner membrane translocase subunit TIM50-A (343 aa).

Residues 1-57 (MHKIVWFGTLNKSIGYIGKKKTCLLSPCEKICLNSARKTVQRCDKNYSPPKLRRIKN) are Mitochondrial matrix-facing. A helical membrane pass occupies residues 58-77 (FYTYSVVLGSLFSIVMWAIY). The Mitochondrial intermembrane segment spans residues 78–343 (KLGKPEEDHR…GRSLRGSSIK (266 aa)). The FCP1 homology domain occupies 135 to 278 (YIQPPYSLVL…FDLTAFLQLI (144 aa)).

This sequence belongs to the TIM50 family. As to quaternary structure, component of the TIM23 complex at least composed of Tim23, Tim17 (Tim17a1, Tim17a2 or Tim17b1) and a Tim50. Exclusively expressed in the testis.

It is found in the mitochondrion inner membrane. Essential component of the TIM23 complex, a complex that mediates the translocation of transit peptide-containing proteins across the mitochondrial inner membrane. The chain is Mitochondrial import inner membrane translocase subunit TIM50-A (ttm3) from Drosophila melanogaster (Fruit fly).